The sequence spans 88 residues: uncharacterized protein (88 aa).

This is an uncharacterized protein from Sinorhizobium fredii (strain NBRC 101917 / NGR234).